A 353-amino-acid chain; its full sequence is E3 ubiquitin-protein ligase Os03g0188200 (353 aa).

The chain crosses the membrane as a helical span at residues 48-68 (VVVLVALITAFVLLTVFSVLI). The RING-type; atypical zinc-finger motif lies at 133-175 (CAVCLAEFADSDELRVLPACCHVFHPDCIDPWLAAAVTCPLCR). Composition is skewed to basic and acidic residues over residues 308–318 (ADWDAGEEHGG) and 340–353 (GSKE…LNRV). Positions 308 to 353 (ADWDAGEEHGGSKRVHPVAGAQDETPSGSGSDGSKENSDSDALNRV) are disordered.

Its subcellular location is the membrane. The catalysed reaction is S-ubiquitinyl-[E2 ubiquitin-conjugating enzyme]-L-cysteine + [acceptor protein]-L-lysine = [E2 ubiquitin-conjugating enzyme]-L-cysteine + N(6)-ubiquitinyl-[acceptor protein]-L-lysine.. Its pathway is protein modification; protein ubiquitination. Possesses E3 ubiquitin-protein ligase in vitro. This is E3 ubiquitin-protein ligase Os03g0188200 from Oryza sativa subsp. japonica (Rice).